Reading from the N-terminus, the 452-residue chain is Cysteine--tRNA ligase (452 aa).

Residue cysteine 35 participates in Zn(2+) binding. Residues 37–47 (PTVYDRAHLGN) carry the 'HIGH' region motif. 3 residues coordinate Zn(2+): cysteine 215, histidine 240, and glutamate 244. The 'KMSKS' region motif lies at 273–277 (KMSKS). Position 276 (lysine 276) interacts with ATP.

The protein belongs to the class-I aminoacyl-tRNA synthetase family. In terms of assembly, monomer. Zn(2+) serves as cofactor.

It is found in the cytoplasm. It catalyses the reaction tRNA(Cys) + L-cysteine + ATP = L-cysteinyl-tRNA(Cys) + AMP + diphosphate. This Gluconobacter oxydans (strain 621H) (Gluconobacter suboxydans) protein is Cysteine--tRNA ligase.